A 299-amino-acid polypeptide reads, in one-letter code: MPYPKKVTIKEVGPRDGLQNEPVWIATEDKITWINQLSRTGLSYIEITSFVHPKWIPALRDAIDVAKGIDREKGVTYAALVPNQRGLENALEGGINEACVFMSASETHNRKNINKSTSESLHILKQVNNDAQKANLTTRAYLSTVFGCPYEKDVPIEQVIRLSEALFEFGISELSLGDTIGAANPAQVETVLEALLARFPANQIALHFHDTRGTALANMVTALQMGITVFDGSAGGLGGCPYAPGSSGNAATEDIVYMLEQMDIKTNVKLEKLLSAAKWIEEKMGKPLPSRNLQVFKSS.

In terms of domain architecture, Pyruvate carboxyltransferase spans 7 to 274 (VTIKEVGPRD…KTNVKLEKLL (268 aa)). Arginine 15 contributes to the substrate binding site. A divalent metal cation-binding residues include aspartate 16, histidine 207, and histidine 209. Residue cysteine 240 is part of the active site. Position 249 (asparagine 249) interacts with a divalent metal cation.

The protein belongs to the HMG-CoA lyase family. In terms of assembly, homodimer and homotetramer.

The enzyme catalyses (3S)-3-hydroxy-3-methylglutaryl-CoA = acetoacetate + acetyl-CoA. It functions in the pathway metabolic intermediate metabolism; (S)-3-hydroxy-3-methylglutaryl-CoA degradation; acetoacetate from (S)-3-hydroxy-3-methylglutaryl-CoA: step 1/1. In terms of biological role, involved in the catabolism of branched amino acids such as leucine. The protein is Hydroxymethylglutaryl-CoA lyase YngG (yngG) of Bacillus subtilis (strain 168).